A 1072-amino-acid chain; its full sequence is DNA-directed RNA polymerase subunit beta (1072 aa).

Belongs to the RNA polymerase beta chain family. In plastids the minimal PEP RNA polymerase catalytic core is composed of four subunits: alpha, beta, beta', and beta''. When a (nuclear-encoded) sigma factor is associated with the core the holoenzyme is formed, which can initiate transcription.

The protein localises to the plastid. The protein resides in the chloroplast. The catalysed reaction is RNA(n) + a ribonucleoside 5'-triphosphate = RNA(n+1) + diphosphate. DNA-dependent RNA polymerase catalyzes the transcription of DNA into RNA using the four ribonucleoside triphosphates as substrates. In Arabidopsis thaliana (Mouse-ear cress), this protein is DNA-directed RNA polymerase subunit beta.